A 256-amino-acid chain; its full sequence is Small ribosomal subunit protein eS1 (256 aa).

An N-acetylalanine; partial modification is found at alanine 2.

Belongs to the eukaryotic ribosomal protein eS1 family. As to quaternary structure, component of the small ribosomal subunit. Mature ribosomes consist of a small (40S) and a large (60S) subunit. The 40S subunit contains about 33 different proteins and 1 molecule of RNA (18S). The 60S subunit contains about 49 different proteins and 3 molecules of RNA (25S, 5.8S and 5S).

It localises to the cytoplasm. The protein is Small ribosomal subunit protein eS1 of Fusarium vanettenii (strain ATCC MYA-4622 / CBS 123669 / FGSC 9596 / NRRL 45880 / 77-13-4) (Fusarium solani subsp. pisi).